The sequence spans 340 residues: Anthocyanidin reductase (340 aa).

NADP(+)-binding residues include lysine 49 and tyrosine 169.

The protein belongs to the NAD(P)-dependent epimerase/dehydratase family. Dihydroflavonol-4-reductase subfamily. Homo- or heterodimer. As to expression, flowers and young siliques. Detected specifically in the endothelium of seed coat.

It carries out the reaction a (2R,3R)-flavan-3-ol + 2 NAD(+) = an anthocyanidin with a 3-hydroxy group + 2 NADH + 2 H(+). The enzyme catalyses a (2R,3R)-flavan-3-ol + 2 NADP(+) = an anthocyanidin with a 3-hydroxy group + 2 NADPH + 2 H(+). It functions in the pathway secondary metabolite biosynthesis; flavonoid biosynthesis. Inhibited by (+)-catechin, quercetin and (+)- and (-)-dihydroquercetin. Not inhibited by salt. Positive cooperativity with NADPH acting as cosubstrate and modulator. Functionally, involved in the biosynthesis of condensed tannins. Converts cyanidin into (-)-epicatechin as the major product. The sequence is that of Anthocyanidin reductase (BAN) from Arabidopsis thaliana (Mouse-ear cress).